The chain runs to 283 residues: 4-hydroxy-3-methylbut-2-enyl diphosphate reductase (283 aa).

Cys-12 contributes to the [4Fe-4S] cluster binding site. Positions 41 and 74 each coordinate (2E)-4-hydroxy-3-methylbut-2-enyl diphosphate. Dimethylallyl diphosphate contacts are provided by His-41 and His-74. Isopentenyl diphosphate contacts are provided by His-41 and His-74. Cys-96 contacts [4Fe-4S] cluster. His-124 is a binding site for (2E)-4-hydroxy-3-methylbut-2-enyl diphosphate. A dimethylallyl diphosphate-binding site is contributed by His-124. His-124 lines the isopentenyl diphosphate pocket. Glu-126 functions as the Proton donor in the catalytic mechanism. Thr-161 provides a ligand contact to (2E)-4-hydroxy-3-methylbut-2-enyl diphosphate. A [4Fe-4S] cluster-binding site is contributed by Cys-189. Residues Ser-217, Asn-219, and Ser-261 each coordinate (2E)-4-hydroxy-3-methylbut-2-enyl diphosphate. Positions 217, 219, and 261 each coordinate dimethylallyl diphosphate. The isopentenyl diphosphate site is built by Ser-217, Asn-219, and Ser-261.

The protein belongs to the IspH family. It depends on [4Fe-4S] cluster as a cofactor.

It catalyses the reaction isopentenyl diphosphate + 2 oxidized [2Fe-2S]-[ferredoxin] + H2O = (2E)-4-hydroxy-3-methylbut-2-enyl diphosphate + 2 reduced [2Fe-2S]-[ferredoxin] + 2 H(+). The enzyme catalyses dimethylallyl diphosphate + 2 oxidized [2Fe-2S]-[ferredoxin] + H2O = (2E)-4-hydroxy-3-methylbut-2-enyl diphosphate + 2 reduced [2Fe-2S]-[ferredoxin] + 2 H(+). It participates in isoprenoid biosynthesis; dimethylallyl diphosphate biosynthesis; dimethylallyl diphosphate from (2E)-4-hydroxy-3-methylbutenyl diphosphate: step 1/1. The protein operates within isoprenoid biosynthesis; isopentenyl diphosphate biosynthesis via DXP pathway; isopentenyl diphosphate from 1-deoxy-D-xylulose 5-phosphate: step 6/6. In terms of biological role, catalyzes the conversion of 1-hydroxy-2-methyl-2-(E)-butenyl 4-diphosphate (HMBPP) into a mixture of isopentenyl diphosphate (IPP) and dimethylallyl diphosphate (DMAPP). Acts in the terminal step of the DOXP/MEP pathway for isoprenoid precursor biosynthesis. The polypeptide is 4-hydroxy-3-methylbut-2-enyl diphosphate reductase (Anaeromyxobacter sp. (strain Fw109-5)).